We begin with the raw amino-acid sequence, 49 residues long: Large ribosomal subunit protein bL33A (49 aa).

Belongs to the bacterial ribosomal protein bL33 family.

This Enterococcus faecalis (strain ATCC 700802 / V583) protein is Large ribosomal subunit protein bL33A (rpmG1).